A 367-amino-acid chain; its full sequence is tRNA/tmRNA (uracil-C(5))-methyltransferase (367 aa).

Residues Gln190, Tyr218, Asn223, Glu239, and Asp299 each coordinate S-adenosyl-L-methionine. Cys324 acts as the Nucleophile in catalysis. The Proton acceptor role is filled by Glu358.

The protein belongs to the class I-like SAM-binding methyltransferase superfamily. RNA M5U methyltransferase family. TrmA subfamily.

It carries out the reaction uridine(54) in tRNA + S-adenosyl-L-methionine = 5-methyluridine(54) in tRNA + S-adenosyl-L-homocysteine + H(+). It catalyses the reaction uridine(341) in tmRNA + S-adenosyl-L-methionine = 5-methyluridine(341) in tmRNA + S-adenosyl-L-homocysteine + H(+). Its function is as follows. Dual-specificity methyltransferase that catalyzes the formation of 5-methyluridine at position 54 (m5U54) in all tRNAs, and that of position 341 (m5U341) in tmRNA (transfer-mRNA). In Pectobacterium atrosepticum (strain SCRI 1043 / ATCC BAA-672) (Erwinia carotovora subsp. atroseptica), this protein is tRNA/tmRNA (uracil-C(5))-methyltransferase.